Reading from the N-terminus, the 117-residue chain is Non-specific lipid-transfer protein 1 (117 aa).

Residues 1 to 25 form the signal peptide; the sequence is MAGLVKLSCLVLACMIVAGPIATNA. Cystine bridges form between Cys29/Cys76, Cys39/Cys53, Cys54/Cys99, and Cys74/Cys113.

This sequence belongs to the plant LTP family.

Plant non-specific lipid-transfer proteins transfer phospholipids as well as galactolipids across membranes. May play a role in wax or cutin deposition in the cell walls of expanding epidermal cells and certain secretory tissues. The sequence is that of Non-specific lipid-transfer protein 1 (LTP1) from Brassica napus (Rape).